The sequence spans 118 residues: Co-chaperonin GroES (118 aa).

The protein belongs to the GroES chaperonin family. As to quaternary structure, heptamer of 7 subunits arranged in a ring. Interacts with the chaperonin GroEL.

It is found in the cytoplasm. Together with the chaperonin GroEL, plays an essential role in assisting protein folding. The GroEL-GroES system forms a nano-cage that allows encapsulation of the non-native substrate proteins and provides a physical environment optimized to promote and accelerate protein folding. GroES binds to the apical surface of the GroEL ring, thereby capping the opening of the GroEL channel. This is Co-chaperonin GroES from Helicobacter pylori (strain G27).